The chain runs to 502 residues: Glycerol kinase (502 aa).

An ADP-binding site is contributed by threonine 14. ATP-binding residues include threonine 14, threonine 15, and serine 16. Residue threonine 14 coordinates sn-glycerol 3-phosphate. Arginine 18 lines the ADP pocket. The sn-glycerol 3-phosphate site is built by arginine 84, glutamate 85, tyrosine 136, and aspartate 246. Glycerol contacts are provided by arginine 84, glutamate 85, tyrosine 136, aspartate 246, and glutamine 247. Residues threonine 268 and glycine 311 each coordinate ADP. ATP contacts are provided by threonine 268, glycine 311, glutamine 315, and glycine 412. 2 residues coordinate ADP: glycine 412 and asparagine 416.

The protein belongs to the FGGY kinase family.

It catalyses the reaction glycerol + ATP = sn-glycerol 3-phosphate + ADP + H(+). Its pathway is polyol metabolism; glycerol degradation via glycerol kinase pathway; sn-glycerol 3-phosphate from glycerol: step 1/1. With respect to regulation, inhibited by fructose 1,6-bisphosphate (FBP). Key enzyme in the regulation of glycerol uptake and metabolism. Catalyzes the phosphorylation of glycerol to yield sn-glycerol 3-phosphate. This Pasteurella multocida (strain Pm70) protein is Glycerol kinase.